A 235-amino-acid chain; its full sequence is Phosphoribosylaminoimidazole-succinocarboxamide synthase (235 aa).

The protein belongs to the SAICAR synthetase family.

It catalyses the reaction 5-amino-1-(5-phospho-D-ribosyl)imidazole-4-carboxylate + L-aspartate + ATP = (2S)-2-[5-amino-1-(5-phospho-beta-D-ribosyl)imidazole-4-carboxamido]succinate + ADP + phosphate + 2 H(+). It functions in the pathway purine metabolism; IMP biosynthesis via de novo pathway; 5-amino-1-(5-phospho-D-ribosyl)imidazole-4-carboxamide from 5-amino-1-(5-phospho-D-ribosyl)imidazole-4-carboxylate: step 1/2. This is Phosphoribosylaminoimidazole-succinocarboxamide synthase from Streptococcus thermophilus (strain ATCC BAA-491 / LMD-9).